We begin with the raw amino-acid sequence, 254 residues long: C-X-C motif chemokine 16 (254 aa).

Positions 1-29 (MGRDLRPGSRVLLLLLLLLLVYLTQPGNG) are cleaved as a signal peptide. The Extracellular segment spans residues 30–205 (NEGSVTGSCY…AGPTARTSAT (176 aa)). Residues 32-107 (GSVTGSCYCG…DLKECGHAYS (76 aa)) form a chemokine region. Intrachain disulfides connect C38–C68 and C40–C82. The disordered stretch occupies residues 146-165 (QSTQRPTLPVGSLSSDKELT). N-linked (GlcNAc...) asparagine glycosylation is present at N168. Residues 178-200 (SLAAGPEAGENQKQPEKNAGPTA) are disordered. Residues 206-226 (VPVLCLLAIIFILTAALSYVL) traverse the membrane as a helical segment. Residues 227–254 (CKRRRGQSPQSSPDLPVHYIPVAPDSNT) are Cytoplasmic-facing. Residues 231 to 254 (RGQSPQSSPDLPVHYIPVAPDSNT) are disordered.

Belongs to the intercrine alpha (chemokine CxC) family. Post-translationally, glycosylated. As to expression, expressed in T-cell areas. Expressed in spleen, lymph nodes, lung, kidney, small intestine and thymus. Weak expression in heart and liver and no expression in brain and bone marrow.

The protein resides in the cell membrane. It is found in the secreted. In terms of biological role, acts as a scavenger receptor on macrophages, which specifically binds to OxLDL (oxidized low density lipoprotein), suggesting that it may be involved in pathophysiology such as atherogenesis. Induces a strong chemotactic response. Induces calcium mobilization. Binds to CXCR6/Bonzo. The chain is C-X-C motif chemokine 16 (CXCL16) from Homo sapiens (Human).